The primary structure comprises 238 residues: Sugar fermentation stimulation protein homolog (238 aa).

It belongs to the SfsA family.

The sequence is that of Sugar fermentation stimulation protein homolog from Brucella abortus (strain S19).